The chain runs to 308 residues: B3 domain-containing protein REM23 (308 aa).

The segment at residues 19-114 is a DNA-binding region (TF-B3 1); that stretch reads FFKVLKRSDM…SFTVKIFNKD (96 aa). The interval 117 to 198 is disordered; that stretch reads EMMQPPQSRA…TERTQNSKRT (82 aa). Residues 121-133 show a composition bias toward polar residues; sequence PPQSRASFASSSR. Residues 134–145 show a composition bias toward basic and acidic residues; that stretch reads VKTEQDVKREEE. Residues 149–166 show a composition bias toward polar residues; that stretch reads SSDSRSRGPTTAAETNRG. Over residues 168-177 the composition is skewed to basic residues; sequence SYKRKLNFGK. Positions 178–198 are enriched in basic and acidic residues; the sequence is KKAEETQTYKRTERTQNSKRT. The segment at residues 216–308 is a DNA-binding region (TF-B3 2); it reads VAGFKIFISK…LELLLVVSKP (93 aa).

It is found in the nucleus. The sequence is that of B3 domain-containing protein REM23 (REM23) from Arabidopsis thaliana (Mouse-ear cress).